A 1450-amino-acid polypeptide reads, in one-letter code: Phospholipase B1, membrane-associated (1450 aa).

Positions 1–27 are cleaved as a signal peptide; the sequence is MESWPGVSLVGLLLLLLLGQGPSQIHG. Topologically, residues 28–1422 are extracellular; that stretch reads SSGENTSQPQ…KAKENSNTLY (1395 aa). Residues Asn32, Asn45, and Asn179 are each glycosylated (N-linked (GlcNAc...) asparagine). Tandem repeats lie at residues 41–351, 366–711, and 712–1058. The 4 X 308-326 AA approximate repeats stretch occupies residues 41–1407; the sequence is RTLKNFSFPC…NPFLYTVRNS (1367 aa). Catalysis depends on residues Ser404, Asp518, and His659. The N-linked (GlcNAc...) asparagine glycan is linked to Asn699. The segment covering 708 to 720 has biased composition (polar residues); it reads TKNSNLGHGTSMS. The interval 708–734 is disordered; the sequence is TKNSNLGHGTSMSCEEKAPSASPPTSV. N-linked (GlcNAc...) asparagine glycosylation is found at Asn787, Asn801, Asn844, Asn880, Asn926, Asn1059, Asn1226, Asn1280, Asn1383, and Asn1387. Copy 4 of the repeat occupies 1068–1407; the sequence is IENWGSDFLC…NPFLYTVRNS (340 aa). Positions 1408–1450 are necessary for membrane localization; it reads QILLDKAKENSNTLYWAVPVAAVGGLVVGILGMMLWRTVRLVQ. The helical transmembrane segment at 1423–1443 threads the bilayer; that stretch reads WAVPVAAVGGLVVGILGMMLW. The Cytoplasmic portion of the chain corresponds to 1444-1450; sequence RTVRLVQ.

It belongs to the 'GDSL' lipolytic enzyme family. Phospholipase B1 subfamily. Undergoes proteolytic cleavage in the ileum. Expressed in the ileum mucosa, Paneth cells spermatocytes, spermatids and sperm (at protein level). Expressed in the ileum, jejunum, esophagus and testis.

It is found in the apical cell membrane. The enzyme catalyses a 1,2-diacyl-sn-glycero-3-phosphocholine + H2O = a 1-acyl-sn-glycero-3-phosphocholine + a fatty acid + H(+). It catalyses the reaction a 1-O-alkyl-2-acyl-sn-glycero-3-phosphocholine + H2O = a 1-O-alkyl-sn-glycero-3-phosphocholine + a fatty acid + H(+). The catalysed reaction is a 1-acyl-sn-glycero-3-phosphocholine + H2O = sn-glycerol 3-phosphocholine + a fatty acid + H(+). It carries out the reaction a triacylglycerol + H2O = a diacylglycerol + a fatty acid + H(+). The enzyme catalyses 1,2-dihexadecanoyl-sn-glycero-3-phosphocholine + H2O = 1-hexadecanoyl-sn-glycero-3-phosphocholine + hexadecanoate + H(+). It catalyses the reaction 1-hexadecanoyl-2-(9Z-octadecenoyl)-sn-glycero-3-phosphocholine + H2O = 1-hexadecanoyl-sn-glycero-3-phosphocholine + (9Z)-octadecenoate + H(+). The catalysed reaction is 1,2-di-(9Z-octadecenoyl)-sn-glycero-3-phosphocholine + H2O = 1-(9Z-octadecenoyl)-sn-glycero-3-phosphocholine + (9Z)-octadecenoate + H(+). It carries out the reaction 1-hexadecanoyl-2-(9Z,12Z-octadecadienoyl)-sn-glycero-3-phosphocholine + H2O = (9Z,12Z)-octadecadienoate + 1-hexadecanoyl-sn-glycero-3-phosphocholine + H(+). The enzyme catalyses 1-hexadecanoyl-2-(9Z,12Z-octadecadienoyl)-sn-glycero-3-phosphocholine + H2O = 2-(9Z,12Z-octadecadienoyl)-sn-glycero-3-phosphocholine + hexadecanoate + H(+). It catalyses the reaction 1-hexadecanoyl-2-(9Z-octadecenoyl)-sn-glycero-3-phosphoethanolamine + H2O = 1-hexadecanoyl-sn-glycero-3-phosphoethanolamine + (9Z)-octadecenoate + H(+). The catalysed reaction is 1-hexadecanoyl-2-(9Z-octadecenoyl)-sn-glycero-3-phospho-(1'-sn-glycerol) + H2O = 1-hexadecanoyl-sn-glycero-3-phospho-(1'-sn-glycerol) + (9Z)-octadecenoate + H(+). It carries out the reaction 1,2-dihexadecanoyl-sn-glycero-3-phosphocholine + 2 H2O = sn-glycerol 3-phosphocholine + 2 hexadecanoate + 2 H(+). The enzyme catalyses 1-O-hexadecyl-2-(9Z)-octadecenoyl-sn-glycero-3-phosphocholine + H2O = 1-O-hexadecyl-sn-glycero-3-phosphocholine + (9Z)-octadecenoate + H(+). It catalyses the reaction 1-hexadecanoyl-sn-glycero-3-phosphocholine + H2O = sn-glycerol 3-phosphocholine + hexadecanoate + H(+). The catalysed reaction is 1,2,3-tri-(9Z-octadecenoyl)-glycerol + H2O = di-(9Z)-octadecenoylglycerol + (9Z)-octadecenoate + H(+). It carries out the reaction 1-hexadecanoyl-2-(9Z)-octadecenoyl-3-octadecanoyl-sn-glycerol + H2O = 1-hexadecanoyl-2-(9Z-octadecenoyl)-sn-glycerol + octadecanoate + H(+). The enzyme catalyses 1,3-dihexadecanoyl-2-(9Z-octadecenoyl)glycerol + H2O = 1,3-dihexadecanoylglycerol + (9Z)-octadecenoate + H(+). It catalyses the reaction 1,3-dihexadecanoyl-2-(9Z-octadecenoyl)glycerol + H2O = 1-hexadecanoyl-2-(9Z-octadecenoyl)-glycerol + hexadecanoate + H(+). The catalysed reaction is 1-hexadecanoyl-2-(9Z)-octadecenoyl-3-octadecanoyl-sn-glycerol + H2O = 1-hexadecanoyl-3-octadecanoyl-sn-glycerol + (9Z)-octadecenoate + H(+). It carries out the reaction 1-hexadecanoyl-2-(9Z)-octadecenoyl-3-octadecanoyl-sn-glycerol + H2O = 2-(9Z-octadecenoyl)-3-octadecanoyl-sn-glycerol + hexadecanoate + H(+). The enzyme catalyses 1-octadecanoyl-2-(9Z,12Z)-octadecadienoyl-sn-glycerol + H2O = 1-octadecanoyl-sn-glycerol + (9Z,12Z)-octadecadienoate + H(+). It catalyses the reaction 1,2-di-(9Z-octadecenoyl)-sn-glycerol + H2O = 1-(9Z-octadecenoyl)-sn-glycerol + (9Z)-octadecenoate + H(+). The catalysed reaction is 2,3-di-(9Z)-octadecenoyl-sn-glycerol + H2O = 3-(9Z-octadecenoyl)-sn-glycerol + (9Z)-octadecenoate + H(+). It carries out the reaction 1,3-di-(9Z-octadecenoyl)-glycerol + H2O = 1-(9Z-octadecenoyl)-glycerol + (9Z)-octadecenoate + H(+). The enzyme catalyses 1-(9Z-octadecenoyl)-glycerol + H2O = glycerol + (9Z)-octadecenoate + H(+). It catalyses the reaction 2-(9Z-octadecenoyl)-glycerol + H2O = glycerol + (9Z)-octadecenoate + H(+). Its activity is regulated as follows. Up-regulated by bile acids such as deoxycholate. Inhibited by diisopropyl fluorophosphate. In terms of biological role, calcium-independent membrane-associated phospholipase that catalyzes complete diacylation of phospholipids by hydrolyzing both sn-1 and sn-2 fatty acyl chains attached to the glycerol backbone (phospholipase B activity). Has dual phospholipase and lysophospholipase activities toward diacylphospholipids. Preferentially cleaves sn-2 ester bonds over sn-1 bonds. Acts as a lipase toward glycerolipid substrates. Hydrolyzes fatty acyl chains of diacylglycerols with preference for the sn-2 position and of triacylglycerols with not positional selectivity. May also hydrolyze long chain retinyl esters such as retinyl palmitate. May contribute to digestion of dietary phospholipids, glycerolipids and retinoids, facilitating lipid absorption at the brush border. This chain is Phospholipase B1, membrane-associated (Plb1), found in Rattus norvegicus (Rat).